Here is a 560-residue protein sequence, read N- to C-terminus: 2-succinylbenzoate--CoA ligase, chloroplastic/peroxisomal (560 aa).

Residues 1 to 15 constitute a chloroplast transit peptide; the sequence is MANHSRPHICQCLTR. Transmembrane regions (helical) follow at residues 69-89, 189-209, and 225-245; these read LFLE…PLNY, GVTI…AIAG, and IGGL…VLLP. A Microbody targeting signal motif is present at residues 558–560; that stretch reads SSL.

The protein belongs to the ATP-dependent AMP-binding enzyme family. MenE subfamily. In terms of tissue distribution, high expression in young leaves and flowers. Not expressed in roots.

Its subcellular location is the plastid. It localises to the chloroplast membrane. The protein resides in the peroxisome membrane. It catalyses the reaction 2-succinylbenzoate + ATP + CoA = 2-succinylbenzoyl-CoA + AMP + diphosphate. In terms of biological role, involved in the biosynthesis of phylloquinone (vitamin K1). Converts 2-succinylbenzoate (OSB) to 2-succinylbenzoyl-CoA (OSB-CoA). The sequence is that of 2-succinylbenzoate--CoA ligase, chloroplastic/peroxisomal (AAE14) from Arabidopsis thaliana (Mouse-ear cress).